The chain runs to 334 residues: Holliday junction branch migration complex subunit RuvB (334 aa).

The tract at residues 1 to 181 is large ATPase domain (RuvB-L); that stretch reads MTRILDNDLM…FGITGHMEYY (181 aa). Residues L20, R21, G62, K65, T66, T67, 128–130, R171, Y181, and R218 contribute to the ATP site; that span reads EDF. T66 lines the Mg(2+) pocket. The segment at 182–252 is small ATPAse domain (RuvB-S); the sequence is QVDDLTEIVE…MTDKALEMLD (71 aa). The segment at 255–334 is head domain (RuvB-H); sequence HEGLDYVDQK…LKYPLDTKTE (80 aa). Positions 291, 310, 312, and 315 each coordinate DNA.

It belongs to the RuvB family. In terms of assembly, homohexamer. Forms an RuvA(8)-RuvB(12)-Holliday junction (HJ) complex. HJ DNA is sandwiched between 2 RuvA tetramers; dsDNA enters through RuvA and exits via RuvB. An RuvB hexamer assembles on each DNA strand where it exits the tetramer. Each RuvB hexamer is contacted by two RuvA subunits (via domain III) on 2 adjacent RuvB subunits; this complex drives branch migration. In the full resolvosome a probable DNA-RuvA(4)-RuvB(12)-RuvC(2) complex forms which resolves the HJ.

Its subcellular location is the cytoplasm. It carries out the reaction ATP + H2O = ADP + phosphate + H(+). In terms of biological role, the RuvA-RuvB-RuvC complex processes Holliday junction (HJ) DNA during genetic recombination and DNA repair, while the RuvA-RuvB complex plays an important role in the rescue of blocked DNA replication forks via replication fork reversal (RFR). RuvA specifically binds to HJ cruciform DNA, conferring on it an open structure. The RuvB hexamer acts as an ATP-dependent pump, pulling dsDNA into and through the RuvAB complex. RuvB forms 2 homohexamers on either side of HJ DNA bound by 1 or 2 RuvA tetramers; 4 subunits per hexamer contact DNA at a time. Coordinated motions by a converter formed by DNA-disengaged RuvB subunits stimulates ATP hydrolysis and nucleotide exchange. Immobilization of the converter enables RuvB to convert the ATP-contained energy into a lever motion, pulling 2 nucleotides of DNA out of the RuvA tetramer per ATP hydrolyzed, thus driving DNA branch migration. The RuvB motors rotate together with the DNA substrate, which together with the progressing nucleotide cycle form the mechanistic basis for DNA recombination by continuous HJ branch migration. Branch migration allows RuvC to scan DNA until it finds its consensus sequence, where it cleaves and resolves cruciform DNA. The polypeptide is Holliday junction branch migration complex subunit RuvB (Streptococcus uberis (strain ATCC BAA-854 / 0140J)).